A 124-amino-acid polypeptide reads, in one-letter code: Small ribosomal subunit protein uS12 (124 aa).

The interval 1–32 (MPTIQQLVRKGRQAKASKTKTPALKGSPQRRG) is disordered. Over residues 9-18 (RKGRQAKASK) the composition is skewed to basic residues. D89 is modified (3-methylthioaspartic acid).

Belongs to the universal ribosomal protein uS12 family. In terms of assembly, part of the 30S ribosomal subunit. Contacts proteins S8 and S17. May interact with IF1 in the 30S initiation complex.

With S4 and S5 plays an important role in translational accuracy. Its function is as follows. Interacts with and stabilizes bases of the 16S rRNA that are involved in tRNA selection in the A site and with the mRNA backbone. Located at the interface of the 30S and 50S subunits, it traverses the body of the 30S subunit contacting proteins on the other side and probably holding the rRNA structure together. The combined cluster of proteins S8, S12 and S17 appears to hold together the shoulder and platform of the 30S subunit. The sequence is that of Small ribosomal subunit protein uS12 from Acidothermus cellulolyticus (strain ATCC 43068 / DSM 8971 / 11B).